Here is a 754-residue protein sequence, read N- to C-terminus: Aspartyl/asparaginyl beta-hydroxylase (754 aa).

The tract at residues 1–48 (MAPRKNAKGGGGNSSSSSSGSPTGCTSGGSSSPGARRETKQGGLKNGR) is disordered. The Cytoplasmic portion of the chain corresponds to 1-56 (MAPRKNAKGGGGNSSSSSSGSPTGCTSGGSSSPGARRETKQGGLKNGRKGGLSGSS). Over residues 14–34 (SSSSSSGSPTGCTSGGSSSPG) the composition is skewed to low complexity. At serine 15 the chain carries Phosphoserine. A helical; Signal-anchor for type II membrane protein membrane pass occupies residues 57-77 (FFTWFMVIALLGVWTSVAVVW). At 78 to 754 (FDLVDYEEVL…PHQRRSLPAI (677 aa)) the chain is on the lumenal side. Residue asparagine 96 is glycosylated (N-linked (GlcNAc...) asparagine). Ca(2+) is bound by residues aspartate 109, aspartate 111, aspartate 113, aspartate 115, and aspartate 120. Disordered regions lie at residues 176 to 197 (VYSE…ELQP) and 247 to 326 (EQEN…KKKK). 2 stretches are compositionally biased toward basic and acidic residues: residues 261–284 (DAER…DHAV) and 309–318 (TNKKADEPGK). TPR repeat units follow at residues 337–370 (IKAE…YPQS), 378–411 (AQCE…PDAP), 450–483 (TALK…TPND), 485–517 (FAKV…GDPG), and 521–553 (GRFY…GHFA). A glycan (N-linked (GlcNAc...) asparagine) is linked at asparagine 466. Tryptophan 621 serves as a coordination point for 2-oxoglutarate. A disulfide bond links cysteine 637 and cysteine 644. Serine 664 lines the 2-oxoglutarate pocket. Histidine 675 contributes to the Fe cation binding site. 684-686 (RMH) contributes to the 2-oxoglutarate binding site. Asparagine 702 carries N-linked (GlcNAc...) asparagine glycosylation. Histidine 721 provides a ligand contact to Fe cation. Arginine 731 is a 2-oxoglutarate binding site.

Belongs to the aspartyl/asparaginyl beta-hydroxylase family. In terms of assembly, monomer. Requires Fe cation as cofactor. In terms of processing, might be processed to the 56 kDa (AA 289-754) or 52 kDa (AA 311-754) forms in the lumen of the endoplasmic reticulum.

It is found in the endoplasmic reticulum membrane. It catalyses the reaction L-aspartyl-[protein] + 2-oxoglutarate + O2 = 3-hydroxy-L-aspartyl-[protein] + succinate + CO2. Its function is as follows. Specifically hydroxylates an Asp or Asn residue in certain epidermal growth factor-like (EGF) domains of a number of proteins. The chain is Aspartyl/asparaginyl beta-hydroxylase (ASPH) from Bos taurus (Bovine).